A 522-amino-acid polypeptide reads, in one-letter code: DEP domain-containing protein 7 (522 aa).

Residues 46 to 138 form the DEP domain; it reads LYTQVEVKKR…SSCSLYRFLN (93 aa).

The protein belongs to the DEPDC7 family.

The sequence is that of DEP domain-containing protein 7 (depdc7) from Xenopus laevis (African clawed frog).